Consider the following 354-residue polypeptide: GTPase Obg (354 aa).

Residues 1 to 159 form the Obg domain; it reads MKFVDEVKIH…RDLVLELKLL (159 aa). The OBG-type G domain maps to 160-333; it reads ADVGIVGYPN…LLDAVGRALF (174 aa). Residues 166-173, 191-195, 212-215, 283-286, and 314-316 each bind GTP; these read GYPNAGKS, FTTLT, DIPG, TKID, and SAV. Residues Ser173 and Thr193 each coordinate Mg(2+).

Belongs to the TRAFAC class OBG-HflX-like GTPase superfamily. OBG GTPase family. Monomer. It depends on Mg(2+) as a cofactor.

The protein localises to the cytoplasm. In terms of biological role, an essential GTPase which binds GTP, GDP and possibly (p)ppGpp with moderate affinity, with high nucleotide exchange rates and a fairly low GTP hydrolysis rate. Plays a role in control of the cell cycle, stress response, ribosome biogenesis and in those bacteria that undergo differentiation, in morphogenesis control. The protein is GTPase Obg of Anaeromyxobacter sp. (strain K).